Reading from the N-terminus, the 388-residue chain is Chaperone protein DnaJ (388 aa).

Positions 5 to 70 (DYYEVLGVAR…QKRAAYDRFG (66 aa)) constitute a J domain. The segment at 141-219 (GKTETIRLPT…CGGAGRVTRE (79 aa)) adopts a CR-type zinc-finger fold. Zn(2+)-binding residues include Cys154, Cys157, Cys171, Cys174, Cys193, Cys196, Cys207, and Cys210. 4 CXXCXGXG motif repeats span residues 154 to 161 (CEVCAGSG), 171 to 178 (CPTCGGYG), 193 to 200 (CPNCHGRG), and 207 to 214 (CTACGGAG).

The protein belongs to the DnaJ family. Homodimer. Requires Zn(2+) as cofactor.

The protein resides in the cytoplasm. Functionally, participates actively in the response to hyperosmotic and heat shock by preventing the aggregation of stress-denatured proteins and by disaggregating proteins, also in an autonomous, DnaK-independent fashion. Unfolded proteins bind initially to DnaJ; upon interaction with the DnaJ-bound protein, DnaK hydrolyzes its bound ATP, resulting in the formation of a stable complex. GrpE releases ADP from DnaK; ATP binding to DnaK triggers the release of the substrate protein, thus completing the reaction cycle. Several rounds of ATP-dependent interactions between DnaJ, DnaK and GrpE are required for fully efficient folding. Also involved, together with DnaK and GrpE, in the DNA replication of plasmids through activation of initiation proteins. This Methylobacterium nodulans (strain LMG 21967 / CNCM I-2342 / ORS 2060) protein is Chaperone protein DnaJ.